A 388-amino-acid chain; its full sequence is Beta-hexosaminidase LpqI (388 aa).

A signal peptide spans 1–19 (MAFPRTLAILAAAAALVVA). Residue Cys-20 is the site of N-palmitoyl cysteine attachment. The S-diacylglycerol cysteine moiety is linked to residue Cys-20. Substrate is bound by residues Asp-123, Arg-131, Arg-193, and 223–224 (KH). The active-site Proton donor/acceptor is the His-236. Asp-311 functions as the Nucleophile in the catalytic mechanism.

Belongs to the glycosyl hydrolase 3 family.

The protein localises to the cell inner membrane. It carries out the reaction Hydrolysis of terminal non-reducing N-acetyl-D-hexosamine residues in N-acetyl-beta-D-hexosaminides.. It functions in the pathway cell wall biogenesis; peptidoglycan recycling. Its function is as follows. Plays a role in peptidoglycan recycling by cleaving the terminal beta-1,4-linked N-acetylglucosamine (GlcNAc) from peptidoglycan fragments. Acts as a regulator for GlcNAc-MurNAc levels by cleaving disaccharides and allowing the breakdown of MurNAc. In Mycobacterium tuberculosis (strain ATCC 25618 / H37Rv), this protein is Beta-hexosaminidase LpqI.